Reading from the N-terminus, the 147-residue chain is Large ribosomal subunit protein bL9 (147 aa).

It belongs to the bacterial ribosomal protein bL9 family.

Functionally, binds to the 23S rRNA. In Campylobacter jejuni subsp. jejuni serotype O:23/36 (strain 81-176), this protein is Large ribosomal subunit protein bL9.